Reading from the N-terminus, the 83-residue chain is Alpha-neurotoxin NTX-3 (83 aa).

An N-terminal signal peptide occupies residues 1–21 (MKTLLLTLLVVTIVCLDLGYT). Disulfide bonds link Cys24/Cys45, Cys38/Cys62, Cys64/Cys75, and Cys76/Cys81.

This sequence belongs to the three-finger toxin family. Short-chain subfamily. Type I alpha-neurotoxin sub-subfamily. Expressed by the venom gland.

Its subcellular location is the secreted. Its function is as follows. Binds to muscle nicotinic acetylcholine receptor (nAChR) and inhibit acetylcholine from binding to the receptor, thereby impairing neuromuscular transmission. The chain is Alpha-neurotoxin NTX-3 from Naja sputatrix (Malayan spitting cobra).